Consider the following 252-residue polypeptide: Cyclic di-GMP binding protein VCA0042 (252 aa).

Residues 1-11 (MNSRPAEKIDN) show a composition bias toward basic and acidic residues. The tract at residues 1 to 24 (MNSRPAEKIDNNDGQTETPRSKTV) is disordered. The span at 12–24 (NDGQTETPRSKTV) shows a compositional bias: polar residues. The PilZ domain occupies 134–233 (QLRKEPRFEL…EEGRNNAKNL (100 aa)).

It belongs to the YcgR family. In terms of assembly, dimer.

Its subcellular location is the bacterial flagellum basal body. Functionally, may act as a flagellar brake, regulating swimming and swarming in a bis-(3'-5') cyclic diguanylic acid (c-di-GMP)-dependent manner. Increasing levels of c-di-GMP lead to decreased motility (Potential). Binds bis-(3'-5') cyclic diguanylic acid (c-di-GMP) with a dissociation constant of 170 nM in the presence of 10 mM KCl and with 100 nM in its absence. Binds 1 to 2 c-di-GMP per subunit. Only 1 c-di-GMP is seen in the wild-type crystal, while 2 are seen in the mutant. Depending on the concentration of K(+) stoichiometries of 1:1, 1.43:1 and 2:1 are determined by isothermal titration calorimetry. This chain is Cyclic di-GMP binding protein VCA0042, found in Vibrio cholerae serotype O1 (strain ATCC 39315 / El Tor Inaba N16961).